Consider the following 185-residue polypeptide: MIADIKKDAQERMGKCVEATKNQMAKVRTGRAHPSLLDSIQVSYYGTMTPLNQVANVGIEDARTLSVTVFDRSAIQAVEKAIMSSDLGLNPMSAGATLRIPLPALTEERRKDFIKVVRAEAEGGRVAIRNVRRDAISEVKKLEKAKECTEDDVRRFEDEVQKFTDAHIKKVDEILAAKEIELMEV.

It belongs to the RRF family.

Its subcellular location is the cytoplasm. Its function is as follows. Responsible for the release of ribosomes from messenger RNA at the termination of protein biosynthesis. May increase the efficiency of translation by recycling ribosomes from one round of translation to another. This is Ribosome-recycling factor from Shewanella sp. (strain ANA-3).